Reading from the N-terminus, the 240-residue chain is Ribosomal RNA small subunit methyltransferase G (240 aa).

S-adenosyl-L-methionine-binding positions include Gly80, Phe85, 103-105 (DSS), 131-132 (AE), and Arg150.

This sequence belongs to the methyltransferase superfamily. RNA methyltransferase RsmG family.

Its subcellular location is the cytoplasm. Functionally, specifically methylates the N7 position of a guanine in 16S rRNA. The polypeptide is Ribosomal RNA small subunit methyltransferase G (Thermoanaerobacter pseudethanolicus (strain ATCC 33223 / 39E) (Clostridium thermohydrosulfuricum)).